Reading from the N-terminus, the 185-residue chain is Ribosome-recycling factor (185 aa).

K162 bears the N6-acetyllysine mark.

It belongs to the RRF family.

The protein resides in the cytoplasm. In terms of biological role, responsible for the release of ribosomes from messenger RNA at the termination of protein biosynthesis. May increase the efficiency of translation by recycling ribosomes from one round of translation to another. The chain is Ribosome-recycling factor from Shigella boydii serotype 18 (strain CDC 3083-94 / BS512).